A 157-amino-acid chain; its full sequence is MRVGYGYDVHRLQEGRRLVLGGVEIPHMQGLLGHSDADVLLHAICDALLGAAALGDIGQHFPDSDSQYKDINSLLLLKEVAGILQRAGWRVINVDSTVVAQEPRLAPHIKQMRQNIARVLAIESEQVSVKATTTEGLGFAGRQQGISAHAVVLIEQA.

2 residues coordinate a divalent metal cation: aspartate 8 and histidine 10. 4-CDP-2-C-methyl-D-erythritol 2-phosphate contacts are provided by residues 8-10 (DVH) and 34-35 (HS). Histidine 42 contributes to the a divalent metal cation binding site. Residues 56 to 58 (DIG), 61 to 65 (FPDSD), 132 to 135 (TTTE), phenylalanine 139, and arginine 142 each bind 4-CDP-2-C-methyl-D-erythritol 2-phosphate.

The protein belongs to the IspF family. As to quaternary structure, homotrimer. A divalent metal cation serves as cofactor.

It carries out the reaction 4-CDP-2-C-methyl-D-erythritol 2-phosphate = 2-C-methyl-D-erythritol 2,4-cyclic diphosphate + CMP. It functions in the pathway isoprenoid biosynthesis; isopentenyl diphosphate biosynthesis via DXP pathway; isopentenyl diphosphate from 1-deoxy-D-xylulose 5-phosphate: step 4/6. Involved in the biosynthesis of isopentenyl diphosphate (IPP) and dimethylallyl diphosphate (DMAPP), two major building blocks of isoprenoid compounds. Catalyzes the conversion of 4-diphosphocytidyl-2-C-methyl-D-erythritol 2-phosphate (CDP-ME2P) to 2-C-methyl-D-erythritol 2,4-cyclodiphosphate (ME-CPP) with a corresponding release of cytidine 5-monophosphate (CMP). The protein is 2-C-methyl-D-erythritol 2,4-cyclodiphosphate synthase of Syntrophomonas wolfei subsp. wolfei (strain DSM 2245B / Goettingen).